Consider the following 288-residue polypeptide: MPRTPHLLAIQSHVVFGHAGNAAAVFPMQRIGINVWPLNTVQFSNHTQYGQWTGQVLPPEQIPALVDGIAGIGELGNCDAVLSGYLGSAAQGRAILDVVARIKQANPRALYLCDPVMGHPEKGCIVAPEVSDFLLEEAAAVADYLCPNQLELDSFCDRQPNSLADCVEMARSLLARGPRAILVKHLNYPGKAGDTFEMLLVAADQAWHLQRPLLAFPRQPVGVGDLASGLFLSRLLLGDDLRNAFEFAGAAVHEVLLETQACGSYELELVRAQDRIAHPRVRFDAVRL.

Substrate is bound by residues S12 and 47–48 (TQ). ATP contacts are provided by residues D114, E151, K184, and 211-214 (RPLL). D225 provides a ligand contact to substrate.

Belongs to the pyridoxine kinase family. PdxY subfamily. In terms of assembly, homodimer. Mg(2+) is required as a cofactor.

The enzyme catalyses pyridoxal + ATP = pyridoxal 5'-phosphate + ADP + H(+). It functions in the pathway cofactor metabolism; pyridoxal 5'-phosphate salvage; pyridoxal 5'-phosphate from pyridoxal: step 1/1. Functionally, pyridoxal kinase involved in the salvage pathway of pyridoxal 5'-phosphate (PLP). Catalyzes the phosphorylation of pyridoxal to PLP. This chain is Pyridoxal kinase PdxY, found in Pseudomonas aeruginosa (strain UCBPP-PA14).